The chain runs to 103 residues: Small ribosomal subunit protein uS10 (103 aa).

Belongs to the universal ribosomal protein uS10 family. In terms of assembly, part of the 30S ribosomal subunit.

Involved in the binding of tRNA to the ribosomes. This Chlorobium luteolum (strain DSM 273 / BCRC 81028 / 2530) (Pelodictyon luteolum) protein is Small ribosomal subunit protein uS10.